We begin with the raw amino-acid sequence, 283 residues long: Polyamine aminopropyltransferase (283 aa).

The PABS domain maps to 5 to 238 (STWIDEYHKG…GIWSWTFASE (234 aa)). An S-methyl-5'-thioadenosine-binding site is contributed by Q32. Residues H63 and D87 each coordinate spermidine. Residues E107 and 139–140 (DG) contribute to the S-methyl-5'-thioadenosine site. Catalysis depends on D158, which acts as the Proton acceptor. A spermidine-binding site is contributed by 158–161 (DCSD).

It belongs to the spermidine/spermine synthase family. Homodimer or homotetramer.

The protein localises to the cytoplasm. The catalysed reaction is S-adenosyl 3-(methylsulfanyl)propylamine + putrescine = S-methyl-5'-thioadenosine + spermidine + H(+). It functions in the pathway amine and polyamine biosynthesis; spermidine biosynthesis; spermidine from putrescine: step 1/1. Catalyzes the irreversible transfer of a propylamine group from the amino donor S-adenosylmethioninamine (decarboxy-AdoMet) to putrescine (1,4-diaminobutane) to yield spermidine. The sequence is that of Polyamine aminopropyltransferase from Prochlorococcus marinus (strain MIT 9312).